Reading from the N-terminus, the 205-residue chain is SREBP regulating gene protein (205 aa).

Residues 1-16 are Cytoplasmic-facing; the sequence is MVPCGAVLWRRLLRKR. Residues 17 to 35 form a helical membrane-spanning segment; it reads WVLGVVFGLSLVYFLSSTF. Residues 36-205 are Lumenal-facing; sequence KQEERTVRDR…GEYPPELLPV (170 aa). Residue Asn-67 is glycosylated (N-linked (GlcNAc...) asparagine).

This sequence belongs to the SPRING family.

The protein localises to the golgi apparatus membrane. Functionally, positively regulates hepatic SREBP signaling pathway by modulating the proper localization of SCAP (SREBP cleavage-activating protein) to the endoplasmic reticulum, thereby controlling the level of functional SCAP. In Gallus gallus (Chicken), this protein is SREBP regulating gene protein.